Here is a 64-residue protein sequence, read N- to C-terminus: DGYIRGSNGCKISCLWGNEGCNKECKGFGAYYGYCWTWGLACWCEGLPDDKTWKSESNTCGRKK.

The 61-residue stretch at 1 to 61 folds into the LCN-type CS-alpha/beta domain; sequence DGYIRGSNGC…TWKSESNTCG (61 aa). 4 disulfides stabilise this stretch: cysteine 10-cysteine 60, cysteine 14-cysteine 35, cysteine 21-cysteine 42, and cysteine 25-cysteine 44. The residue at position 60 (cysteine 60) is a Cysteine amide.

Belongs to the long (4 C-C) scorpion toxin superfamily. Sodium channel inhibitor family. Beta subfamily. In terms of tissue distribution, expressed by the venom gland.

The protein resides in the secreted. Depressant insect beta-toxins cause a transient contraction paralysis followed by a slow flaccid paralysis. They bind voltage-independently at site-4 of sodium channels (Nav) and shift the voltage of activation toward more negative potentials thereby affecting sodium channel activation and promoting spontaneous and repetitive firing. This toxin is active only on insects. The polypeptide is Beta-insect depressant toxin BmKIT4 (Olivierus martensii (Manchurian scorpion)).